Reading from the N-terminus, the 182-residue chain is Isopentenyl-diphosphate Delta-isomerase (182 aa).

Mn(2+) contacts are provided by His25 and His32. The Nudix hydrolase domain maps to 30 to 164; it reads LLHLAFSSWL…PWAFSPWMVM (135 aa). Residue Cys67 is part of the active site. His69 contributes to the Mn(2+) binding site. Residue Glu87 participates in Mg(2+) binding. 2 residues coordinate Mn(2+): Glu114 and Glu116. Residue Glu116 is part of the active site.

The protein belongs to the IPP isomerase type 1 family. Homodimer. Mg(2+) is required as a cofactor. It depends on Mn(2+) as a cofactor.

Its subcellular location is the cytoplasm. It catalyses the reaction isopentenyl diphosphate = dimethylallyl diphosphate. Its pathway is isoprenoid biosynthesis; dimethylallyl diphosphate biosynthesis; dimethylallyl diphosphate from isopentenyl diphosphate: step 1/1. Functionally, catalyzes the 1,3-allylic rearrangement of the homoallylic substrate isopentenyl (IPP) to its highly electrophilic allylic isomer, dimethylallyl diphosphate (DMAPP). The chain is Isopentenyl-diphosphate Delta-isomerase from Escherichia coli (strain SMS-3-5 / SECEC).